The chain runs to 434 residues: Alpha-enolase (434 aa).

S40 is a binding site for Mg(2+). 2 residues coordinate substrate: H158 and E167. The active-site Proton donor is E210. Residues D245, E293, and D318 each coordinate Mg(2+). 2 residues coordinate substrate: E293 and D318. The active-site Proton acceptor is the K343. Residues 370–373 and K394 contribute to the substrate site; that span reads SHRS.

Belongs to the enolase family. In terms of assembly, homodimer. Mg(2+) serves as cofactor.

The protein resides in the cytoplasm. The catalysed reaction is (2R)-2-phosphoglycerate = phosphoenolpyruvate + H2O. The protein operates within carbohydrate degradation; glycolysis; pyruvate from D-glyceraldehyde 3-phosphate: step 4/5. In Gallus gallus (Chicken), this protein is Alpha-enolase (ENO1).